A 1763-amino-acid polypeptide reads, in one-letter code: MTRAKVIYFSGEIPQGDPEGDQRNLFRKLHLLSKERDYPILASFLETVTWAMKEEHRRLVRAQRDLLPTFESILDLTDHVVELRKTSLGGAIERVLVLAFQLGSFIAYHEAHPLEYNFQASDTFLIARGPGMLSAAAVALCPSLPMISSISADITRVAFRFGLVVDQVCRSLEVSPDEINSAGAWIYCVYGVDPQKAHEAVTRFNAEKAYAETSMASVFNDDGKSVSIGGPPSTLKTLFTECDFFKRTKNVPMKKVQGMWHTGKVYGTEHVHQIIPKIHQKHQLYLPLFSPVKGQPLEAASATDLLEQIMEEMLTQRIRWDRTIQNVTERLKQASPESTQLIAIQPSQYVESLIGQWRADMPTTTHTTEDMMSAVMDLPLGNSRAKDAKSSKIAVVGMACRFPGGADNAEKFWELLAQGRDVHSPIPSDRFNIETHVDPAGKVPNTSKTPYGCFVDNPGLFDAMFFGMSPREAEQTDPMQRLALVTAYEALEHSGYVHGRGIHARRVGTFYGQASDDYREVNSGQDVGTYFIPGGCRAFGPGRINYFFKFWGPSFSVDTACSSSLAAIQAACTSLWSGDVDMAITGGMNIITNSDVYAGLSNGHFLSPTGGCKTWDEGADGYCRADGVGSVVLKRLEDAEADNDNILGVVLAAATDHSAEAVSITHPHDVAQAHLYNQVARRAGIDPLAVGYVEMHGTGTQAGDSNEMKSVTNVFAPSTGHIRDRDSPLHIGTVKSNMGHGEAAAGIMAFVKTMLVFQKGIIPPHIGIKTRFNPALPEDLAKRNVVIPVTAAIWVRNSDRKRLAMVNNFGAAGGNTSIIIEEAAPRPRTSEDVRKAQVITVSAKTANSLQENLKALVDYIEARSELSVADLAYTLSARRNHYNYRVSVLATSTAEAASLLRPHIKTSLSQTPHSGKQVPIAFAFTGQGTFYIGIGAQLYRDSHEFRKHIDQLDSLVRRQNFASFLPVVSGNVQPEDVSIVTMNLAIVCVEIALARLWESFGIKPSMVIGHSLGEYAALAVAGVLSDSAAIFLVGTRARLLTSKCTSRTHGMLSVRASAADIKHAGGDIPFEVSCINGPNETVLGGTLSNMEALSATLAAAGYRTFKLDLPHAYHTYQMDTIVDELVKQTETVVCKKTTIPIISPRFSRVMTSEDSIDVSYLIGATRETVDFAGALDDAWQSGLVNESTIWLEMGHHPTCSGFISRTLSSTRMALPSLQRDTDNWLTLAKTLCSLYSAGIPIDWNEYHRPFEQALRLIDAPTYAWTNKNYWIQYRGDWNLTKGRAMPKLDPTTTVVPVSKRFQTSSIHRLISEQYTDGKAILSAESSITDPSLQGVVDGHAMNGYGVASSFLHAEMAFTLAKRVSDKSFASAVSFGINVADFEYHEPVVKLINTSEPQPILVSAEADLEKMEVHVKWFNPAKEIWYCHATVFYEDPSSWLSTWSRSTKLITSRIDALNDMAVTGKASKLTTDLAYSLFGKLVGYSKLYQTMQSVILNEDEAMAEVQFPEDTGGSWTVPPHFIDGLISLSGFILNGGTHFDNTNNFFITPSWKSMRFARPLTPGGRYTAYVRMVPSDNHSFVGDVYVLQGSEIVGVVEAILFLQWPRVMLNRFFRPADVTAKPAAKVPGKSEPSTRPHFKPHHVSRHKPTLTPRSPDEGSENSDSSGVIISRPGGYSSSDQDMEELPSPPAGMNDDMEKALALVAEELAVDIGLLTDDALIADLGLDSLMSLVMSQRLREELGLEIRDAFFLEITTIQDLKALLR.

The tract at residues 20-261 (GDQRNLFRKL…PMKKVQGMWH (242 aa)) is N-terminal acylcarrier protein transacylase domain (SAT). The Ketosynthase family 3 (KS3) domain maps to 390-822 (SSKIAVVGMA…GGNTSIIIEE (433 aa)). Catalysis depends on for beta-ketoacyl synthase activity residues C561, H696, and H740. A malonyl-CoA:ACP transacylase (MAT) domain region spans residues 922–1227 (FAFTGQGTFY…QRDTDNWLTL (306 aa)). The segment at 1307-1439 (HRLISEQYTD…VFYEDPSSWL (133 aa)) is N-terminal hotdog fold. In terms of domain architecture, PKS/mFAS DH spans 1307–1609 (HRLISEQYTD…FLQWPRVMLN (303 aa)). Positions 1334–1588 (GVVDGHAMNG…FVGDVYVLQG (255 aa)) are product template (PT) domain. The Proton acceptor; for dehydratase activity role is filled by H1339. The tract at residues 1461 to 1609 (VTGKASKLTT…FLQWPRVMLN (149 aa)) is C-terminal hotdog fold. Residue D1522 is the Proton donor; for dehydratase activity of the active site. The disordered stretch occupies residues 1619–1690 (AKPAAKVPGK…MEELPSPPAG (72 aa)). A compositionally biased stretch (basic residues) spans 1635 to 1647 (PHFKPHHVSRHKP). In terms of domain architecture, Carrier spans 1689 to 1763 (AGMNDDMEKA…TIQDLKALLR (75 aa)). Residue S1726 is modified to O-(pantetheine 4'-phosphoryl)serine.

Its function is as follows. Non-reducing polyketide synthase that mediates the biosynthesis of alternariol (AOH), a micotoxin that seems not to be involved in virulence and oxidative stress tolerance. PKS19 alone is sufficient for AOH synthesis which is initiated by priming with acetyl-CoA, followed by sequential condensations of 6 malonyl-CoA units. The chain is Non-reducing polyketide synthase PKS19 from Phaeosphaeria nodorum (strain SN15 / ATCC MYA-4574 / FGSC 10173) (Glume blotch fungus).